The chain runs to 202 residues: Large ribosomal subunit protein uL4 (202 aa).

The disordered stretch occupies residues 40-71 (GRQGSKAQKTRSQVSGGGKKPWRQKGSGRARA). The segment covering 44–53 (SKAQKTRSQV) has biased composition (polar residues).

It belongs to the universal ribosomal protein uL4 family. In terms of assembly, part of the 50S ribosomal subunit.

One of the primary rRNA binding proteins, this protein initially binds near the 5'-end of the 23S rRNA. It is important during the early stages of 50S assembly. It makes multiple contacts with different domains of the 23S rRNA in the assembled 50S subunit and ribosome. Its function is as follows. Forms part of the polypeptide exit tunnel. This chain is Large ribosomal subunit protein uL4, found in Hahella chejuensis (strain KCTC 2396).